A 320-amino-acid polypeptide reads, in one-letter code: Pantothenate kinase (320 aa).

96 to 103 (GSVAVGKS) lines the ATP pocket.

This sequence belongs to the prokaryotic pantothenate kinase family.

The protein localises to the cytoplasm. The catalysed reaction is (R)-pantothenate + ATP = (R)-4'-phosphopantothenate + ADP + H(+). It functions in the pathway cofactor biosynthesis; coenzyme A biosynthesis; CoA from (R)-pantothenate: step 1/5. The sequence is that of Pantothenate kinase from Brevibacillus brevis (strain 47 / JCM 6285 / NBRC 100599).